A 178-amino-acid chain; its full sequence is Ribosome maturation factor RimP (178 aa).

This sequence belongs to the RimP family.

It is found in the cytoplasm. In terms of biological role, required for maturation of 30S ribosomal subunits. This Streptococcus pyogenes serotype M3 (strain ATCC BAA-595 / MGAS315) protein is Ribosome maturation factor RimP.